The chain runs to 122 residues: Protein C10 (122 aa).

The protein belongs to the UPF0456 family.

The protein localises to the cytoplasm. In Danio rerio (Zebrafish), this protein is Protein C10.